A 334-amino-acid chain; its full sequence is Ornithine carbamoyltransferase (334 aa).

Carbamoyl phosphate contacts are provided by residues 56–59 (STRT), Gln83, Arg107, and 134–137 (HPTQ). L-ornithine is bound by residues Asn168, Asp232, and 236 to 237 (SM). Carbamoyl phosphate is bound by residues 274–275 (CL) and Arg320.

This sequence belongs to the aspartate/ornithine carbamoyltransferase superfamily. OTCase family.

It is found in the cytoplasm. It carries out the reaction carbamoyl phosphate + L-ornithine = L-citrulline + phosphate + H(+). Its pathway is amino-acid biosynthesis; L-arginine biosynthesis; L-arginine from L-ornithine and carbamoyl phosphate: step 1/3. In terms of biological role, reversibly catalyzes the transfer of the carbamoyl group from carbamoyl phosphate (CP) to the N(epsilon) atom of ornithine (ORN) to produce L-citrulline. This Escherichia coli O45:K1 (strain S88 / ExPEC) protein is Ornithine carbamoyltransferase.